Consider the following 78-residue polypeptide: Conotoxin ArMKLT2-0312 (78 aa).

An N-terminal signal peptide occupies residues 1-22; that stretch reads MKLTCVLIIAVLFLTACQLITA. A propeptide spanning residues 23–45 is cleaved from the precursor; the sequence is DYSRDKQEYRAVRLRDAMRYSRV. Gln48 carries the pyrrolidone carboxylic acid modification. 3 disulfides stabilise this stretch: Cys49–Cys62, Cys56–Cys67, and Cys61–Cys75.

This sequence belongs to the conotoxin O1 superfamily. As to expression, expressed by the venom duct.

It is found in the secreted. This Conus arenatus (Sand-dusted cone) protein is Conotoxin ArMKLT2-0312.